We begin with the raw amino-acid sequence, 370 residues long: L-lysine 4-hydroxylase (370 aa).

H176, E178, and H310 together coordinate Fe cation.

This sequence belongs to the clavaminate synthase family. Fe(2+) is required as a cofactor.

It catalyses the reaction L-lysine + 2-oxoglutarate + O2 = (4R)-4-hydroxy-L-lysine + succinate + CO2. Its function is as follows. Alpha-ketoglutarate-dependent dioxygenase that in vitro catalyzes the regio- and stereoselective hydroxylation of L-lysine, leading to (4R)-4-hydroxy-L-lysine. To a lesser extent, can also use (3S)-3-hydroxy-L-lysine as substrate, producing the dihydroxylated product (3R,4R)-3,4-hydroxy-L-lysine. Cannot use D-lysine or L-ornithine as substrate. This chain is L-lysine 4-hydroxylase, found in Flavobacterium johnsoniae (strain ATCC 17061 / DSM 2064 / JCM 8514 / BCRC 14874 / CCUG 350202 / NBRC 14942 / NCIMB 11054 / UW101) (Cytophaga johnsonae).